The following is a 179-amino-acid chain: Large ribosomal subunit protein uL6 (179 aa).

This sequence belongs to the universal ribosomal protein uL6 family. As to quaternary structure, part of the 50S ribosomal subunit.

This protein binds to the 23S rRNA, and is important in its secondary structure. It is located near the subunit interface in the base of the L7/L12 stalk, and near the tRNA binding site of the peptidyltransferase center. In Bifidobacterium longum subsp. infantis (strain ATCC 15697 / DSM 20088 / JCM 1222 / NCTC 11817 / S12), this protein is Large ribosomal subunit protein uL6.